We begin with the raw amino-acid sequence, 320 residues long: Taste receptor type 2 member 109 (320 aa).

Residues 1 to 14 are Extracellular-facing; the sequence is MEHFLKSIFDISKN. The helical transmembrane segment at 15 to 35 threads the bilayer; the sequence is VLPIILFIELIIGIIGNGFMA. Residues 36–62 are Cytoplasmic-facing; that stretch reads LVHCMDWVKRKKMSLVNQILTTLATSR. A helical membrane pass occupies residues 63 to 83; it reads ICLLWFMLLGLLITLLDPDLA. Residues 84 to 94 lie on the Extracellular side of the membrane; the sequence is SARMMIQVASN. Residues 95 to 115 traverse the membrane as a helical segment; that stretch reads LWIIANHMSIWLATCLTVFYF. The Cytoplasmic portion of the chain corresponds to 116 to 135; the sequence is LKIANFSSSLFLYLKWRVEK. Residues 136–156 form a helical membrane-spanning segment; that stretch reads VISVIFLVSLVLLFLNMLLMN. Residues 157–191 lie on the Extracellular side of the membrane; it reads LENDMCIAEYHQINISYSFIYHYRADCERRVLRLH. N-linked (GlcNAc...) asparagine glycosylation occurs at asparagine 170. Residues 192-212 form a helical membrane-spanning segment; the sequence is IIILSVPFVLSLPTFLLLIFS. Residues 213 to 240 are Cytoplasmic-facing; sequence LWTHHKKMQQHVQGRRDASTTAHFKALQ. The helical transmembrane segment at 241–261 threads the bilayer; sequence TVIAFLLLYCIFILSMLLQFW. The Extracellular portion of the chain corresponds to 262 to 270; the sequence is KYELMKKPL. The chain crosses the membrane as a helical span at residues 271 to 291; it reads FILFCHIVYGAFPSFHSYVLI. Over 292-320 the chain is Cytoplasmic; the sequence is LGDMKLRQASLSVLLWLKCRPNYIETLDL.

This sequence belongs to the G-protein coupled receptor T2R family.

It localises to the membrane. Putative taste receptor which may play a role in the perception of bitterness. This chain is Taste receptor type 2 member 109, found in Rattus norvegicus (Rat).